A 1091-amino-acid chain; its full sequence is ATPase family AAA domain-containing protein 2 (1091 aa).

Residues 32-211 form a disordered region; it reads LEDLGVFNET…HFERRRKRSR (180 aa). Positions 53 to 62 are enriched in basic and acidic residues; sequence KQKDIQRTDE. Positions 74 to 119 are enriched in acidic residues; that stretch reads SSEEGEDQEHEDDGEDEDDEDEDDDDDDDDDDDDDEDDEDEEDGEE. Lysine 148 participates in a covalent cross-link: Glycyl lysine isopeptide (Lys-Gly) (interchain with G-Cter in SUMO2). Serine 158, serine 168, serine 173, and serine 241 each carry phosphoserine. 298 to 305 is an ATP binding site; that stretch reads GPPGTGKT. Phosphoserine occurs at positions 577 and 582. Coiled-coil stretches lie at residues 801–825 and 917–943; these read LTAE…IFLR and YAII…KKRG. Residues 811–923 form the Bromo domain; that stretch reads EQEEDTFREL…DTAYAIIKEE (113 aa). A Glycyl lysine isopeptide (Lys-Gly) (interchain with G-Cter in SUMO2) cross-link involves residue lysine 959. Residues 961–985 are disordered; sequence NSTLVGDKRSDPEQNEKLKTPSTPV. The segment covering 966–979 has biased composition (basic and acidic residues); it reads GDKRSDPEQNEKLK. At serine 970 the chain carries Phosphoserine. Residue lysine 979 forms a Glycyl lysine isopeptide (Lys-Gly) (interchain with G-Cter in SUMO2) linkage. Residues threonine 980 and threonine 983 each carry the phosphothreonine modification. Phosphoserine is present on serine 1003. Threonine 1024 carries the phosphothreonine modification.

The protein belongs to the AAA ATPase family. In terms of assembly, interaction with ESR1 and NCOA3 is enhanced by estradiol. Interacts with acetylated lysine residues on histone H1.4, H2A, H2B and H3 (in vitro).

The protein localises to the nucleus. The catalysed reaction is ATP + H2O = ADP + phosphate + H(+). Its function is as follows. May be a transcriptional coactivator of the nuclear receptor ESR1 required to induce the expression of a subset of estradiol target genes, such as CCND1, MYC and E2F1. May play a role in the recruitment or occupancy of CREBBP at some ESR1 target gene promoters. May be required for histone hyperacetylation. The sequence is that of ATPase family AAA domain-containing protein 2 (ATAD2) from Pongo abelii (Sumatran orangutan).